Reading from the N-terminus, the 203-residue chain is Outer-membrane lipoprotein LolB (203 aa).

An N-terminal signal peptide occupies residues 1 to 18 (MTLRSFLIFFLSSLILAG). Residue cysteine 19 is the site of N-palmitoyl cysteine attachment. The S-diacylglycerol cysteine moiety is linked to residue cysteine 19.

The protein belongs to the LolB family. In terms of assembly, monomer.

Its subcellular location is the cell outer membrane. In terms of biological role, plays a critical role in the incorporation of lipoproteins in the outer membrane after they are released by the LolA protein. The sequence is that of Outer-membrane lipoprotein LolB from Vibrio parahaemolyticus serotype O3:K6 (strain RIMD 2210633).